The primary structure comprises 340 residues: Ras association domain-containing protein 1 (340 aa).

Ser2 carries the post-translational modification N-acetylserine. The residue at position 2 (Ser2) is a Phosphoserine. Residues 2–115 (SAEPELIELR…DLGWDSALER (114 aa)) are mediates interaction with E4F1. Residues 51-101 (GHRFQPAGPTTHTWCDLCGDFIWGVVRKGLQCAHCKFTCHYRCRALVCLDC) form a Phorbol-ester/DAG-type zinc finger. The span at 175-185 (SVPSSKKPPSL) shows a compositional bias: low complexity. The segment at 175 to 196 (SVPSSKKPPSLQDARRGTGRST) is disordered. The region spanning 194–288 (RSTAVKRRTS…LSFVLKENDS (95 aa)) is the Ras-associating domain. Residues 290-337 (EVNWDAFSMPELHNFLRILQREEEEHLRQILQKYSRCRQKIQEALHAC) form the SARAH domain. Residues 311–314 (EEEE) form an MOAP1-binding region.

As to quaternary structure, interacts with MAP1S and XPA. Binds to the N-terminal of CDC20 during prometaphase. Binds to STK3/MST2 and STK4/MST1. Recruited to the TNFRSF1A and TNFRSF10A complexes in response to their respective cognate ligand, after internalization. Can self-associate. Part of a complex with MDM2, DAXX, RASSF1 and USP7. Interacts with MOAP1 and E4F1. Interacts with RSSF5 and probably associates with HRAS via a RSSF1 isoform A-RSSF5 heterodimer. Interacts (via C-terminus) with DAXX (via N-terminus); the interaction is independent of MDM2 and TP53. Interacts (via N-terminus) with MDM2 (via C-terminus); the interaction is independent of TP53. Interacts with RAB39A. Interacts with RAB39B; the interaction is weak. In terms of assembly, interacts with ECM2. Interacts with RAB39B; the interaction is strong. Does not interact with RAB39A.

It localises to the cytoplasm. Its subcellular location is the cytoskeleton. The protein localises to the microtubule organizing center. It is found in the centrosome. The protein resides in the spindle. It localises to the spindle pole. Its subcellular location is the nucleus. In terms of biological role, potential tumor suppressor. Required for death receptor-dependent apoptosis. Mediates activation of Mediates activation of STK3/MST2 and STK4/MST1 during Fas-induced apoptosis by preventing their dephosphorylation. When associated with MOAP1, promotes BAX conformational change and translocation to mitochondrial membranes in response to TNF and TNFSF10 stimulation. Isoform A interacts with CDC20, an activator of the anaphase-promoting complex, APC, resulting in the inhibition of APC activity and mitotic progression. Inhibits proliferation by negatively regulating cell cycle progression at the level of G1/S-phase transition by regulating accumulation of cyclin D1 protein. Isoform C has been shown not to perform these roles, no function has been identified for this isoform. Isoform A disrupts interactions among MDM2, DAXX and USP7, thus contributing to the efficient activation of TP53 by promoting MDM2 self-ubiquitination in cell-cycle checkpoint control in response to DNA damage. The sequence is that of Ras association domain-containing protein 1 from Mus musculus (Mouse).